The chain runs to 602 residues: Glutamine--fructose-6-phosphate aminotransferase [isomerizing] (602 aa).

Cys2 (nucleophile; for GATase activity) is an active-site residue. One can recognise a Glutamine amidotransferase type-2 domain in the interval 2 to 222 (CGIFGIIFAE…DGEYGYITAG (221 aa)). SIS domains are found at residues 284 to 422 (VANA…ALGH) and 452 to 592 (LAKR…PDKP). Lys597 functions as the For Fru-6P isomerization activity in the catalytic mechanism.

Homodimer.

The protein resides in the cytoplasm. The enzyme catalyses D-fructose 6-phosphate + L-glutamine = D-glucosamine 6-phosphate + L-glutamate. Functionally, catalyzes the first step in hexosamine metabolism, converting fructose-6P into glucosamine-6P using glutamine as a nitrogen source. This Pyrobaculum aerophilum (strain ATCC 51768 / DSM 7523 / JCM 9630 / CIP 104966 / NBRC 100827 / IM2) protein is Glutamine--fructose-6-phosphate aminotransferase [isomerizing].